Here is a 300-residue protein sequence, read N- to C-terminus: 4-hydroxy-tetrahydrodipicolinate synthase (300 aa).

T45 is a pyruvate binding site. The active-site Proton donor/acceptor is Y140. K169 acts as the Schiff-base intermediate with substrate in catalysis. I210 contributes to the pyruvate binding site.

The protein belongs to the DapA family. As to quaternary structure, homotetramer; dimer of dimers.

The protein resides in the cytoplasm. It carries out the reaction L-aspartate 4-semialdehyde + pyruvate = (2S,4S)-4-hydroxy-2,3,4,5-tetrahydrodipicolinate + H2O + H(+). It participates in amino-acid biosynthesis; L-lysine biosynthesis via DAP pathway; (S)-tetrahydrodipicolinate from L-aspartate: step 3/4. In terms of biological role, catalyzes the condensation of (S)-aspartate-beta-semialdehyde [(S)-ASA] and pyruvate to 4-hydroxy-tetrahydrodipicolinate (HTPA). The sequence is that of 4-hydroxy-tetrahydrodipicolinate synthase from Helicobacter pylori (strain J99 / ATCC 700824) (Campylobacter pylori J99).